The following is a 233-amino-acid chain: LexA repressor (233 aa).

The segment at residues 26 to 46 is a DNA-binding region (H-T-H motif); it reads FDEMKDALDLRSKSGIHRLIT. Residues serine 154 and lysine 192 each act as for autocatalytic cleavage activity in the active site.

This sequence belongs to the peptidase S24 family. In terms of assembly, homodimer.

The enzyme catalyses Hydrolysis of Ala-|-Gly bond in repressor LexA.. Represses a number of genes involved in the response to DNA damage (SOS response), including recA and lexA. In the presence of single-stranded DNA, RecA interacts with LexA causing an autocatalytic cleavage which disrupts the DNA-binding part of LexA, leading to derepression of the SOS regulon and eventually DNA repair. The polypeptide is LexA repressor (Nitrobacter hamburgensis (strain DSM 10229 / NCIMB 13809 / X14)).